Here is a 62-residue protein sequence, read N- to C-terminus: Ferredoxin-3 (62 aa).

4Fe-4S ferredoxin-type domains lie at 2–28 and 29–62; these read SLKI…SAGS and DIYV…IVKA. [4Fe-4S] cluster-binding residues include cysteine 9, cysteine 12, cysteine 15, cysteine 19, cysteine 38, cysteine 41, cysteine 50, and cysteine 54.

[4Fe-4S] cluster is required as a cofactor.

Ferredoxins are iron-sulfur proteins that transfer electrons in a wide variety of metabolic reactions. The polypeptide is Ferredoxin-3 (Chlorobaculum tepidum (strain ATCC 49652 / DSM 12025 / NBRC 103806 / TLS) (Chlorobium tepidum)).